Here is a 207-residue protein sequence, read N- to C-terminus: Transcriptional regulatory protein RcsA (207 aa).

Positions 131 to 196 constitute an HTH luxR-type domain; it reads INLPTLSLSR…VIYHVVRLTD (66 aa). Positions 155-174 form a DNA-binding region, H-T-H motif; that stretch reads TIQISDRMNIKAKTVSSHKG.

Belongs to the RcsA family. In terms of assembly, interacts with RcsB.

Its function is as follows. Component of the Rcs signaling system, which controls transcription of numerous genes. Binds, with RcsB, to the RcsAB box to regulate expression of genes. The chain is Transcriptional regulatory protein RcsA from Salmonella typhi.